The primary structure comprises 486 residues: Surface lipoprotein assembly modifier (486 aa).

The N-terminal stretch at 1 to 29 (MKNGVKQISFLSLIGLSLIGLSLTNIAWA) is a signal peptide. The interval 30–197 (KVARPKNDTL…QYLLTLNQRN (168 aa)) is N-terminal domain. Residues 198–486 (QWIWQVGLNF…RIYLEIGKIF (289 aa)) form a C-terminal probable beta barrel region. 14 beta stranded membrane passes run 199-209 (WIWQVGLNFLN), 237-248 (GRVFFISRKKWP), 253-262 (FFSKTMFNGN), 276-286 (TLRIGGGLGYQ), 290-300 (VEVSLFPFQEK), 320-330 (LGIRLENVDWL), 334-344 (WQISTALEYGE), 358-367 (YFISSTLFYL), 373-382 (FWFVGMDFHR), 395-404 (KTLRLGWGQD), 409-419 (ISSRLTFSYAN), 437-446 (YATTITLWHR), 453-463 (LTPKLSWDYQK), and 476-486 (NRIYLEIGKIF).

This sequence belongs to the Slam family.

Its subcellular location is the cell outer membrane. In terms of biological role, required for correct export to the cell surface of some cell outer membrane lipoproteins (tested with TpbP) upon heterologous expression in E.coli and probably also in Haemophilus. The sequence is that of Surface lipoprotein assembly modifier from Haemophilus influenzae (strain 86-028NP).